A 389-amino-acid chain; its full sequence is Cobalt-precorrin-5B C(1)-methyltransferase (389 aa).

The segment at 1–25 is disordered; the sequence is MESRADHAVPADEGHGATEPPRGRD.

It belongs to the CbiD family.

The catalysed reaction is Co-precorrin-5B + S-adenosyl-L-methionine = Co-precorrin-6A + S-adenosyl-L-homocysteine. Its pathway is cofactor biosynthesis; adenosylcobalamin biosynthesis; cob(II)yrinate a,c-diamide from sirohydrochlorin (anaerobic route): step 6/10. Catalyzes the methylation of C-1 in cobalt-precorrin-5B to form cobalt-precorrin-6A. This is Cobalt-precorrin-5B C(1)-methyltransferase from Nitratidesulfovibrio vulgaris (strain ATCC 29579 / DSM 644 / CCUG 34227 / NCIMB 8303 / VKM B-1760 / Hildenborough) (Desulfovibrio vulgaris).